Consider the following 148-residue polypeptide: Protein PLANT CADMIUM RESISTANCE 9 (148 aa).

Residues 59-78 form a helical membrane-spanning segment; that stretch reads LAGLMVVAMSSIGCGWYYAS.

This sequence belongs to the cornifelin family.

The protein localises to the membrane. Its function is as follows. May be involved in cadmium resistance. The sequence is that of Protein PLANT CADMIUM RESISTANCE 9 (PCR9) from Arabidopsis thaliana (Mouse-ear cress).